Here is a 294-residue protein sequence, read N- to C-terminus: Glyceraldehyde-3-phosphate dehydrogenase (294 aa).

Residues Asp19, Arg63, and Thr105 each coordinate NAD(+). D-glyceraldehyde 3-phosphate is bound by residues 134–136 (SCT), Thr165, 194–195 (TG), and Arg217. Cys135 serves as the catalytic Nucleophile.

The protein belongs to the glyceraldehyde-3-phosphate dehydrogenase family. Homotetramer.

It is found in the cytoplasm. The enzyme catalyses D-glyceraldehyde 3-phosphate + phosphate + NAD(+) = (2R)-3-phospho-glyceroyl phosphate + NADH + H(+). Its pathway is carbohydrate degradation; glycolysis; pyruvate from D-glyceraldehyde 3-phosphate: step 1/5. Catalyzes the oxidative phosphorylation of glyceraldehyde 3-phosphate (G3P) to 1,3-bisphosphoglycerate (BPG) using the cofactor NAD. The first reaction step involves the formation of a hemiacetal intermediate between G3P and a cysteine residue, and this hemiacetal intermediate is then oxidized to a thioester, with concomitant reduction of NAD to NADH. The reduced NADH is then exchanged with the second NAD, and the thioester is attacked by a nucleophilic inorganic phosphate to produce BPG. In Shimwellia blattae (Escherichia blattae), this protein is Glyceraldehyde-3-phosphate dehydrogenase (gap).